The following is a 239-amino-acid chain: Ribosomal RNA small subunit methyltransferase G (239 aa).

S-adenosyl-L-methionine-binding positions include G79, F84, 130–131, and R149; that span reads AE. Basic residues predominate over residues 218 to 227; that stretch reads KHKKTPKKYP. Residues 218-239 form a disordered region; the sequence is KHKKTPKKYPRQAGTPNKKPIA.

It belongs to the methyltransferase superfamily. RNA methyltransferase RsmG family.

It is found in the cytoplasm. Specifically methylates the N7 position of a guanine in 16S rRNA. In Leuconostoc citreum (strain KM20), this protein is Ribosomal RNA small subunit methyltransferase G.